We begin with the raw amino-acid sequence, 186 residues long: Methyl-CpG-binding domain protein 3-like 1 (186 aa).

Residues 1–104 are transcription repressor; the sequence is MGKTSQRKQC…TSTDTVASAS (104 aa).

The protein belongs to the MBD3L family. In terms of tissue distribution, highly expressed in testis. Not detected in the other tissues tested.

The protein localises to the nucleus. Functionally, transcriptional repressor. In Mus musculus (Mouse), this protein is Methyl-CpG-binding domain protein 3-like 1 (Mbd3l1).